The chain runs to 123 residues: Large ribosomal subunit protein bL21 (123 aa).

It belongs to the bacterial ribosomal protein bL21 family. Part of the 50S ribosomal subunit. Contacts protein L20.

In terms of biological role, this protein binds to 23S rRNA in the presence of protein L20. This chain is Large ribosomal subunit protein bL21, found in Rippkaea orientalis (strain PCC 8801 / RF-1) (Cyanothece sp. (strain PCC 8801)).